The following is a 541-amino-acid chain: Membrane protein insertase YidC (541 aa).

The next 5 helical transmembrane spans lie at 6-26, 349-369, 420-440, 457-477, and 500-520; these read NILLIGLLFVSFLLWQQWQAD, FVGNWGVAIILITLTVRGLLF, GGCLPILLQMPIFIALYWVLL, LSVQDPYYILPLLMGVSMFVM, and VIFTVFFLWFPSGLVLYWLVG.

The protein belongs to the OXA1/ALB3/YidC family. Type 1 subfamily. In terms of assembly, interacts with the Sec translocase complex via SecD. Specifically interacts with transmembrane segments of nascent integral membrane proteins during membrane integration.

It is found in the cell inner membrane. In terms of biological role, required for the insertion and/or proper folding and/or complex formation of integral membrane proteins into the membrane. Involved in integration of membrane proteins that insert both dependently and independently of the Sec translocase complex, as well as at least some lipoproteins. Aids folding of multispanning membrane proteins. This is Membrane protein insertase YidC from Shewanella sp. (strain MR-7).